We begin with the raw amino-acid sequence, 173 residues long: Lipoprotein signal peptidase (173 aa).

A run of 4 helical transmembrane segments spans residues 7 to 27, 41 to 61, 70 to 90, and 95 to 115; these read FFWF…LWVV, LWPG…FSLF, WLSL…PNFN, and AGYG…FVAG. Residues Asp119 and Asp135 contribute to the active site. A helical transmembrane segment spans residues 130 to 150; sequence IFNLADVFINIGIICLLIAAW.

Belongs to the peptidase A8 family.

It localises to the cell inner membrane. The catalysed reaction is Release of signal peptides from bacterial membrane prolipoproteins. Hydrolyzes -Xaa-Yaa-Zaa-|-(S,diacylglyceryl)Cys-, in which Xaa is hydrophobic (preferably Leu), and Yaa (Ala or Ser) and Zaa (Gly or Ala) have small, neutral side chains.. It participates in protein modification; lipoprotein biosynthesis (signal peptide cleavage). Its function is as follows. This protein specifically catalyzes the removal of signal peptides from prolipoproteins. The sequence is that of Lipoprotein signal peptidase from Cyanothece sp. (strain PCC 7425 / ATCC 29141).